The following is a 197-amino-acid chain: Xanthine phosphoribosyltransferase (197 aa).

Xanthine contacts are provided by Leu20 and Thr27. 128-132 (ANGQA) lines the 5-phospho-alpha-D-ribose 1-diphosphate pocket. Residue Lys156 participates in xanthine binding.

It belongs to the purine/pyrimidine phosphoribosyltransferase family. Xpt subfamily. In terms of assembly, homodimer.

The protein localises to the cytoplasm. It catalyses the reaction XMP + diphosphate = xanthine + 5-phospho-alpha-D-ribose 1-diphosphate. It functions in the pathway purine metabolism; XMP biosynthesis via salvage pathway; XMP from xanthine: step 1/1. In terms of biological role, converts the preformed base xanthine, a product of nucleic acid breakdown, to xanthosine 5'-monophosphate (XMP), so it can be reused for RNA or DNA synthesis. This is Xanthine phosphoribosyltransferase from Lactococcus lactis subsp. lactis (strain IL1403) (Streptococcus lactis).